The primary structure comprises 64 residues: uncharacterized protein (64 aa).

It to P.abyssi PAB3148.

This is an uncharacterized protein from Archaeoglobus fulgidus (strain ATCC 49558 / DSM 4304 / JCM 9628 / NBRC 100126 / VC-16).